Consider the following 432-residue polypeptide: Glutamate-1-semialdehyde 2,1-aminomutase 1 (432 aa).

Lysine 272 bears the N6-(pyridoxal phosphate)lysine mark.

This sequence belongs to the class-III pyridoxal-phosphate-dependent aminotransferase family. HemL subfamily. In terms of assembly, homodimer. Pyridoxal 5'-phosphate serves as cofactor.

It is found in the cytoplasm. The enzyme catalyses (S)-4-amino-5-oxopentanoate = 5-aminolevulinate. The protein operates within porphyrin-containing compound metabolism; protoporphyrin-IX biosynthesis; 5-aminolevulinate from L-glutamyl-tRNA(Glu): step 2/2. The protein is Glutamate-1-semialdehyde 2,1-aminomutase 1 of Exiguobacterium sp. (strain ATCC BAA-1283 / AT1b).